Here is a 503-residue protein sequence, read N- to C-terminus: Maturase K (503 aa).

Belongs to the intron maturase 2 family. MatK subfamily.

It localises to the plastid. Its subcellular location is the chloroplast. Usually encoded in the trnK tRNA gene intron. Probably assists in splicing its own and other chloroplast group II introns. The chain is Maturase K from Liquidambar formosana (Formosan gum).